Reading from the N-terminus, the 182-residue chain is Adenine phosphoribosyltransferase (182 aa).

133 to 137 serves as a coordination point for AMP; sequence ATGGS.

This sequence belongs to the purine/pyrimidine phosphoribosyltransferase family. As to quaternary structure, homodimer. The cofactor is Mg(2+).

The protein resides in the cytoplasm. It localises to the nucleus. It carries out the reaction AMP + diphosphate = 5-phospho-alpha-D-ribose 1-diphosphate + adenine. It functions in the pathway purine metabolism; AMP biosynthesis via salvage pathway; AMP from adenine: step 1/1. Functionally, catalyzes a salvage reaction resulting in the formation of AMP, that is energically less costly than de novo synthesis. This chain is Adenine phosphoribosyltransferase (APT1), found in Yarrowia lipolytica (strain CLIB 122 / E 150) (Yeast).